A 181-amino-acid chain; its full sequence is NAD(P)H-quinone oxidoreductase subunit I, chloroplastic (181 aa).

2 consecutive 4Fe-4S ferredoxin-type domains span residues 55–84 (GRIHFEFDKCIACEVCVRVCPINLPVVDWE) and 95–124 (KNYSIDFAVCIFCGNCVEYCPTNCLSMTEE). C64, C67, C70, C74, C104, C107, C110, and C114 together coordinate [4Fe-4S] cluster.

This sequence belongs to the complex I 23 kDa subunit family. In terms of assembly, NDH is composed of at least 16 different subunits, 5 of which are encoded in the nucleus. [4Fe-4S] cluster serves as cofactor.

Its subcellular location is the plastid. It is found in the chloroplast thylakoid membrane. It carries out the reaction a plastoquinone + NADH + (n+1) H(+)(in) = a plastoquinol + NAD(+) + n H(+)(out). It catalyses the reaction a plastoquinone + NADPH + (n+1) H(+)(in) = a plastoquinol + NADP(+) + n H(+)(out). Functionally, NDH shuttles electrons from NAD(P)H:plastoquinone, via FMN and iron-sulfur (Fe-S) centers, to quinones in the photosynthetic chain and possibly in a chloroplast respiratory chain. The immediate electron acceptor for the enzyme in this species is believed to be plastoquinone. Couples the redox reaction to proton translocation, and thus conserves the redox energy in a proton gradient. This chain is NAD(P)H-quinone oxidoreductase subunit I, chloroplastic, found in Angiopteris evecta (Mule's foot fern).